The primary structure comprises 420 residues: MPAPTCFSCHKTRAALRRPRSGQALCGSCFCAAFEAEVLHTVLAGHLLPPGAVVAVGASGGKDSTVLAHVLRELAPRLGITLHLVAVDEGIGGYRDAALEAVRSQAARWELPLTIVAYEDLFGGWTMDAVARSTAGSGRSRSCCTFCGVLRRRALEEGARLVGATHIVTGHNADDMAETVLMNFLRGDAGRLARGGVLGSTGEGCALPRCRPLQFASQKEVVLYAHFRHLRYFSEECVYAPEAFRGHARDLLKLLEAARPSAVLDLVHSAERLALAPAAKPPPPGTCSRCGALASHKLCQACALLDGLNRGLPRLAIGKGRRVLQVEPPQPGNPSLVTSDPVAPAGPCTCKQPKDKANPCGNGGDRAGATCVSQCDLSPGNGEDRAGATCVSQRDLSLGNGGDRAGATCVSQCDLSPVAE.

Phosphoserine is present on Ser200.

This sequence belongs to the TtcA family. CTU1/NCS6/ATPBD3 subfamily. Component of a complex at least composed of URM1, CTU2/NCS2 and CTU1/ATPBD3. May form a heterodimer with CTU2/NCS2.

It localises to the cytoplasm. Its pathway is tRNA modification; 5-methoxycarbonylmethyl-2-thiouridine-tRNA biosynthesis. In terms of biological role, plays a central role in 2-thiolation of mcm(5)S(2)U at tRNA wobble positions of tRNA(Lys), tRNA(Glu) and tRNA(Gln). Directly binds tRNAs and probably acts by catalyzing adenylation of tRNAs, an intermediate required for 2-thiolation. It is unclear whether it acts as a sulfurtransferase that transfers sulfur from thiocarboxylated URM1 onto the uridine of tRNAs at wobble position. The sequence is that of Cytoplasmic tRNA 2-thiolation protein 1 (Ctu1) from Mus musculus (Mouse).